The chain runs to 289 residues: Phosphatidylglycerol--prolipoprotein diacylglyceryl transferase (289 aa).

7 consecutive transmembrane segments (helical) span residues 23–43 (ALHW…WLAV), 61–81 (LLYM…VLFY), 99–119 (GGMS…WFAH), 125–145 (FFQV…AGRL), 199–219 (SQLY…NLFI), 226–246 (GSVS…TEFF), and 259–279 (LFSM…LMMV). R144 provides a ligand contact to a 1,2-diacyl-sn-glycero-3-phospho-(1'-sn-glycerol).

This sequence belongs to the Lgt family.

It localises to the cell inner membrane. It catalyses the reaction L-cysteinyl-[prolipoprotein] + a 1,2-diacyl-sn-glycero-3-phospho-(1'-sn-glycerol) = an S-1,2-diacyl-sn-glyceryl-L-cysteinyl-[prolipoprotein] + sn-glycerol 1-phosphate + H(+). The protein operates within protein modification; lipoprotein biosynthesis (diacylglyceryl transfer). Functionally, catalyzes the transfer of the diacylglyceryl group from phosphatidylglycerol to the sulfhydryl group of the N-terminal cysteine of a prolipoprotein, the first step in the formation of mature lipoproteins. The sequence is that of Phosphatidylglycerol--prolipoprotein diacylglyceryl transferase from Pectobacterium atrosepticum (strain SCRI 1043 / ATCC BAA-672) (Erwinia carotovora subsp. atroseptica).